The sequence spans 407 residues: Accessory Sec system protein translocase subunit SecY2 (407 aa).

10 helical membrane passes run 13–33 (FLWT…TLPF), 65–85 (FFSI…MFTV), 104–124 (MLLT…NLPL), 133–153 (GTIV…LIWL), 158–178 (SSMG…SYIP), 192–212 (PLIL…AVLV), 248–268 (IMYA…LLFF), 287–307 (IPWF…FAFI), 345–365 (FAFV…LLIF), and 370–390 (YMRL…VFSI).

The protein belongs to the SecY/SEC61-alpha family. SecY2 subfamily. As to quaternary structure, may form heterotrimers with SecE and SecG subunits (Potential). Component of the accessory SecA2/SecY2 protein translocase complex required to export cell wall protein GspB.

The protein localises to the cell membrane. The central subunit of a protein translocation channel (Potential). Part of the accessory SecA2/SecY2 system specifically required to export GspB, a serine-rich repeat cell wall protein encoded upstream in the same operon. The chain is Accessory Sec system protein translocase subunit SecY2 from Streptococcus gordonii.